Here is a 455-residue protein sequence, read N- to C-terminus: Bifunctional protein GlmU (455 aa).

The pyrophosphorylase stretch occupies residues 1 to 230 (MVNKNAIILA…FDESMGVNDR (230 aa)). Residues 9-12 (LAAG), lysine 23, glutamine 73, 78-79 (GT), 101-103 (SGD), glycine 140, glutamate 155, asparagine 170, and asparagine 228 contribute to the UDP-N-acetyl-alpha-D-glucosamine site. Position 103 (aspartate 103) interacts with Mg(2+). Asparagine 228 is a Mg(2+) binding site. A linker region spans residues 231-251 (SALAKATKIMQKRINTQLMKD). Residues 252 to 455 (GVTLVDPETA…KPGYAKKLPW (204 aa)) form an N-acetyltransferase region. UDP-N-acetyl-alpha-D-glucosamine contacts are provided by arginine 333 and lysine 351. Histidine 363 (proton acceptor) is an active-site residue. Tyrosine 366 and asparagine 377 together coordinate UDP-N-acetyl-alpha-D-glucosamine. Acetyl-CoA-binding positions include 386–387 (NY), serine 405, alanine 423, and arginine 440.

The protein in the N-terminal section; belongs to the N-acetylglucosamine-1-phosphate uridyltransferase family. It in the C-terminal section; belongs to the transferase hexapeptide repeat family. In terms of assembly, homotrimer. The cofactor is Mg(2+).

Its subcellular location is the cytoplasm. It catalyses the reaction alpha-D-glucosamine 1-phosphate + acetyl-CoA = N-acetyl-alpha-D-glucosamine 1-phosphate + CoA + H(+). The enzyme catalyses N-acetyl-alpha-D-glucosamine 1-phosphate + UTP + H(+) = UDP-N-acetyl-alpha-D-glucosamine + diphosphate. It participates in nucleotide-sugar biosynthesis; UDP-N-acetyl-alpha-D-glucosamine biosynthesis; N-acetyl-alpha-D-glucosamine 1-phosphate from alpha-D-glucosamine 6-phosphate (route II): step 2/2. Its pathway is nucleotide-sugar biosynthesis; UDP-N-acetyl-alpha-D-glucosamine biosynthesis; UDP-N-acetyl-alpha-D-glucosamine from N-acetyl-alpha-D-glucosamine 1-phosphate: step 1/1. It functions in the pathway bacterial outer membrane biogenesis; LPS lipid A biosynthesis. Its function is as follows. Catalyzes the last two sequential reactions in the de novo biosynthetic pathway for UDP-N-acetylglucosamine (UDP-GlcNAc). The C-terminal domain catalyzes the transfer of acetyl group from acetyl coenzyme A to glucosamine-1-phosphate (GlcN-1-P) to produce N-acetylglucosamine-1-phosphate (GlcNAc-1-P), which is converted into UDP-GlcNAc by the transfer of uridine 5-monophosphate (from uridine 5-triphosphate), a reaction catalyzed by the N-terminal domain. This chain is Bifunctional protein GlmU, found in Limosilactobacillus fermentum (strain NBRC 3956 / LMG 18251) (Lactobacillus fermentum).